The sequence spans 500 residues: Probable cytosol aminopeptidase (500 aa).

2 residues coordinate Mn(2+): Lys261 and Asp266. Residue Lys273 is part of the active site. Residues Asp284, Asp343, and Glu345 each contribute to the Mn(2+) site. Residue Arg347 is part of the active site.

The protein belongs to the peptidase M17 family. Mn(2+) is required as a cofactor.

The protein resides in the cytoplasm. The enzyme catalyses Release of an N-terminal amino acid, Xaa-|-Yaa-, in which Xaa is preferably Leu, but may be other amino acids including Pro although not Arg or Lys, and Yaa may be Pro. Amino acid amides and methyl esters are also readily hydrolyzed, but rates on arylamides are exceedingly low.. It carries out the reaction Release of an N-terminal amino acid, preferentially leucine, but not glutamic or aspartic acids.. In terms of biological role, presumably involved in the processing and regular turnover of intracellular proteins. Catalyzes the removal of unsubstituted N-terminal amino acids from various peptides. This Wolbachia pipientis wMel protein is Probable cytosol aminopeptidase.